The following is a 103-amino-acid chain: Large ribosomal subunit protein bL21 (103 aa).

The protein belongs to the bacterial ribosomal protein bL21 family. Part of the 50S ribosomal subunit. Contacts protein L20.

This protein binds to 23S rRNA in the presence of protein L20. In Pseudomonas syringae pv. syringae (strain B728a), this protein is Large ribosomal subunit protein bL21.